The chain runs to 220 residues: Ribosomal RNA large subunit methyltransferase E (220 aa).

A compositionally biased stretch (basic and acidic residues) spans 1 to 10; the sequence is MSRSGKDPGK. Positions 1-24 are disordered; that stretch reads MSRSGKDPGKRVKTARKRSASSTR. S-adenosyl-L-methionine is bound by residues G75, W77, D94, D110, and D134. Catalysis depends on K174, which acts as the Proton acceptor.

Belongs to the class I-like SAM-binding methyltransferase superfamily. RNA methyltransferase RlmE family.

The protein localises to the cytoplasm. It carries out the reaction uridine(2552) in 23S rRNA + S-adenosyl-L-methionine = 2'-O-methyluridine(2552) in 23S rRNA + S-adenosyl-L-homocysteine + H(+). Functionally, specifically methylates the uridine in position 2552 of 23S rRNA at the 2'-O position of the ribose in the fully assembled 50S ribosomal subunit. The polypeptide is Ribosomal RNA large subunit methyltransferase E (Erythrobacter litoralis (strain HTCC2594)).